Consider the following 193-residue polypeptide: Xanthine phosphoribosyltransferase (193 aa).

Xanthine contacts are provided by Leu20 and Thr27. 128 to 132 (ANGQA) lines the 5-phospho-alpha-D-ribose 1-diphosphate pocket. Residue Lys156 coordinates xanthine.

This sequence belongs to the purine/pyrimidine phosphoribosyltransferase family. Xpt subfamily. In terms of assembly, homodimer.

The protein localises to the cytoplasm. It carries out the reaction XMP + diphosphate = xanthine + 5-phospho-alpha-D-ribose 1-diphosphate. It functions in the pathway purine metabolism; XMP biosynthesis via salvage pathway; XMP from xanthine: step 1/1. Converts the preformed base xanthine, a product of nucleic acid breakdown, to xanthosine 5'-monophosphate (XMP), so it can be reused for RNA or DNA synthesis. This Streptococcus equi subsp. zooepidemicus (strain H70) protein is Xanthine phosphoribosyltransferase.